A 189-amino-acid chain; its full sequence is Large ribosomal subunit protein uL5 (189 aa).

It belongs to the universal ribosomal protein uL5 family. Part of the 50S ribosomal subunit; part of the 5S rRNA/L5/L18/L25 subcomplex. Contacts the 5S rRNA and the P site tRNA. Forms a bridge to the 30S subunit in the 70S ribosome.

In terms of biological role, this is one of the proteins that bind and probably mediate the attachment of the 5S RNA into the large ribosomal subunit, where it forms part of the central protuberance. In the 70S ribosome it contacts protein S13 of the 30S subunit (bridge B1b), connecting the 2 subunits; this bridge is implicated in subunit movement. Contacts the P site tRNA; the 5S rRNA and some of its associated proteins might help stabilize positioning of ribosome-bound tRNAs. The polypeptide is Large ribosomal subunit protein uL5 (Parafrankia sp. (strain EAN1pec)).